The primary structure comprises 183 residues: Pentapeptide repeat protein MfpA (183 aa).

Residues 113 to 147 form the Pentapeptide repeat domain; the sequence is SLVDTDLRKCVLRGADLSGARTTGARLDDADLRGA.

The protein belongs to the pentapeptide repeat protein family. In terms of assembly, homodimer. Probably interacts with DNA gyrase.

Its function is as follows. Might be involved in fluoroquinolone resistance. Inhibits ATP-independent DNA relaxation, ATP-dependent DNA supercoiling and ATP-dependent decatenation by endogenous gyrase, 50% inhibition occurs at 2 uM; inhibition is abolished if GyrA is mutated (Asp-87 to Gly or His). Also inhibits fluoroquinolone-promoted dsDNA cleavage. Increases fluoroquinolone (ciprofloxacin or moxifloxacin) inhibition of gyrase supercoiling activity in a concentration-dependent manner. Inhibits DNA relaxation and supercoiling by E.coli gyrase. Forms a structure that exhibits size, shape and electrostatic similarity to B-form DNA; it may bind to DNA gyrase which is postulated to protect it from fluoroquinolones. This Mycobacterium tuberculosis (strain ATCC 25618 / H37Rv) protein is Pentapeptide repeat protein MfpA.